Consider the following 185-residue polypeptide: MTMTMNKDSLALIKQSIKTIADYPKPGIMFRDVTSLLEDASAYQATIALFVEKYQGMGFTKVVGTEARGFLFGAPLALELGIGFVPVRKPGKLPRKTIAQSYELEYGMDTLEIHVDAIKPEDKVLVVDDLLATGGTIEATVKLIRQLGGQVEHAAFVISLPDIGGEKRLAGLGLDVFALCEFEGE.

The protein belongs to the purine/pyrimidine phosphoribosyltransferase family. As to quaternary structure, homodimer.

It localises to the cytoplasm. The catalysed reaction is AMP + diphosphate = 5-phospho-alpha-D-ribose 1-diphosphate + adenine. Its pathway is purine metabolism; AMP biosynthesis via salvage pathway; AMP from adenine: step 1/1. Functionally, catalyzes a salvage reaction resulting in the formation of AMP, that is energically less costly than de novo synthesis. This is Adenine phosphoribosyltransferase from Shewanella denitrificans (strain OS217 / ATCC BAA-1090 / DSM 15013).